The chain runs to 358 residues: Phospho-N-acetylmuramoyl-pentapeptide-transferase (358 aa).

A run of 10 helical transmembrane segments spans residues 26–46 (AIYA…WLID), 70–90 (GTPT…TLLW), 94–114 (TNVY…VGFV), 134–154 (MLWL…YPPF), 169–189 (ELGL…SNAV), 197–217 (GLAI…AYLA), 234–254 (AGEL…FLWF), 261–281 (VFMG…IAVI), 286–306 (IVLV…IVQV), and 335–355 (KIIV…LSTL).

This sequence belongs to the glycosyltransferase 4 family. MraY subfamily. Requires Mg(2+) as cofactor.

The protein localises to the cell inner membrane. The catalysed reaction is UDP-N-acetyl-alpha-D-muramoyl-L-alanyl-gamma-D-glutamyl-meso-2,6-diaminopimeloyl-D-alanyl-D-alanine + di-trans,octa-cis-undecaprenyl phosphate = di-trans,octa-cis-undecaprenyl diphospho-N-acetyl-alpha-D-muramoyl-L-alanyl-D-glutamyl-meso-2,6-diaminopimeloyl-D-alanyl-D-alanine + UMP. The protein operates within cell wall biogenesis; peptidoglycan biosynthesis. Functionally, catalyzes the initial step of the lipid cycle reactions in the biosynthesis of the cell wall peptidoglycan: transfers peptidoglycan precursor phospho-MurNAc-pentapeptide from UDP-MurNAc-pentapeptide onto the lipid carrier undecaprenyl phosphate, yielding undecaprenyl-pyrophosphoryl-MurNAc-pentapeptide, known as lipid I. The protein is Phospho-N-acetylmuramoyl-pentapeptide-transferase of Syntrophotalea carbinolica (strain DSM 2380 / NBRC 103641 / GraBd1) (Pelobacter carbinolicus).